Consider the following 230-residue polypeptide: Sugar fermentation stimulation protein homolog (230 aa).

This sequence belongs to the SfsA family.

The protein is Sugar fermentation stimulation protein homolog of Pelobacter propionicus (strain DSM 2379 / NBRC 103807 / OttBd1).